Reading from the N-terminus, the 232-residue chain is Large ribosomal subunit protein uL1 (232 aa).

This sequence belongs to the universal ribosomal protein uL1 family. In terms of assembly, part of the 50S ribosomal subunit.

In terms of biological role, binds directly to 23S rRNA. The L1 stalk is quite mobile in the ribosome, and is involved in E site tRNA release. Its function is as follows. Protein L1 is also a translational repressor protein, it controls the translation of the L11 operon by binding to its mRNA. This chain is Large ribosomal subunit protein uL1, found in Chlamydia pneumoniae (Chlamydophila pneumoniae).